We begin with the raw amino-acid sequence, 225 residues long: Uracil-DNA glycosylase (225 aa).

D65 serves as the catalytic Proton acceptor.

The protein belongs to the uracil-DNA glycosylase (UDG) superfamily. UNG family.

The protein localises to the cytoplasm. The enzyme catalyses Hydrolyzes single-stranded DNA or mismatched double-stranded DNA and polynucleotides, releasing free uracil.. Its function is as follows. Excises uracil residues from the DNA which can arise as a result of misincorporation of dUMP residues by DNA polymerase or due to deamination of cytosine. In Clostridium perfringens (strain 13 / Type A), this protein is Uracil-DNA glycosylase.